We begin with the raw amino-acid sequence, 190 residues long: Ras-like GTP-binding protein RhoL (190 aa).

Position 18–25 (18–25 (GDGMVGKT)) interacts with GTP. Positions 40 to 48 (YIPTVFDNH) match the Effector region motif. GTP is bound by residues 65–69 (DTAGQ) and 123–126 (TKLD). C187 is modified (cysteine methyl ester). C187 is lipidated: S-geranylgeranyl cysteine. Residues 188–190 (KIL) constitute a propeptide, removed in mature form.

The protein belongs to the small GTPase superfamily. Rho family. In terms of tissue distribution, highly expressed in the embryonic cephalic mesoderm starting from stage 6 and fading by stage 11. Hemocyte precursor cells.

Its subcellular location is the cell membrane. In terms of biological role, essential for the maturation of hemocytes. The polypeptide is Ras-like GTP-binding protein RhoL (RhoL) (Drosophila melanogaster (Fruit fly)).